The following is a 119-amino-acid chain: Large ribosomal subunit protein bL20 (119 aa).

This sequence belongs to the bacterial ribosomal protein bL20 family.

In terms of biological role, binds directly to 23S ribosomal RNA and is necessary for the in vitro assembly process of the 50S ribosomal subunit. It is not involved in the protein synthesizing functions of that subunit. The chain is Large ribosomal subunit protein bL20 from Streptococcus suis (strain 98HAH33).